The primary structure comprises 86 residues: Anti-adapter protein IraP (86 aa).

A coiled-coil region spans residues 1–42 (MKNLIAELLVKLAQKEEESKELVAQVEALEIVVTALLRQMAQ).

This sequence belongs to the IraP family. As to quaternary structure, interacts with RssB.

It is found in the cytoplasm. Functionally, inhibits RpoS proteolysis by regulating RssB activity, thereby increasing the stability of the sigma stress factor RpoS especially during phosphate starvation, but also in stationary phase and during nitrogen starvation. Its effect on RpoS stability is due to its interaction with RssB, which probably blocks the interaction of RssB with RpoS, and the consequent delivery of the RssB-RpoS complex to the ClpXP protein degradation pathway. This chain is Anti-adapter protein IraP, found in Enterobacter sp. (strain 638).